Consider the following 27-residue polypeptide: NADH-ubiquinone oxidoreductase chain 1 (27 aa).

A helical transmembrane segment spans residues 3-23; that stretch reads LIFPLVGSLLLVICVMVGVAF.

The protein belongs to the complex I subunit 1 family.

The protein resides in the mitochondrion inner membrane. The enzyme catalyses a ubiquinone + NADH + 5 H(+)(in) = a ubiquinol + NAD(+) + 4 H(+)(out). Core subunit of the mitochondrial membrane respiratory chain NADH dehydrogenase (Complex I) that is believed to belong to the minimal assembly required for catalysis. Complex I functions in the transfer of electrons from NADH to the respiratory chain. The immediate electron acceptor for the enzyme is believed to be ubiquinone. In Simulium vittatum (Striped black fly), this protein is NADH-ubiquinone oxidoreductase chain 1 (ND1).